We begin with the raw amino-acid sequence, 178 residues long: Caveolin-1 (178 aa).

Ser2 is modified (N-acetylserine). At Ser2 the chain carries Phosphoserine. The interval 2 to 94 (SGGKYVDSEG…WKASFTTFTV (93 aa)) is required for homooligomerization. At 2 to 104 (SGGKYVDSEG…TKYWFYRLLS (103 aa)) the chain is on the cytoplasmic side. N6-acetyllysine; alternate is present on Lys5. A Glycyl lysine isopeptide (Lys-Gly) (interchain with G-Cter in ubiquitin); alternate cross-link involves residue Lys5. Tyr6 is modified (phosphotyrosine). Position 9 is a phosphoserine (Ser9). The residue at position 14 (Tyr14) is a Phosphotyrosine; by ABL1. Tyr25 carries the post-translational modification Phosphotyrosine. Residues Lys26, Lys30, Lys39, Lys47, and Lys57 each participate in a glycyl lysine isopeptide (Lys-Gly) (interchain with G-Cter in ubiquitin) cross-link. The tract at residues 82–94 (DGIWKASFTTFTV) is interaction with CAVIN3. The helical intramembrane region spans 105-125 (TIFGIPMALIWGIYFAILSFL). The Cytoplasmic portion of the chain corresponds to 126 to 178 (HIWAVVPCIKSFLIEIQCISRVYSIYVHTFCDPLFEAIGKIFSNVRISMQKEI). Residues 131-142 (VPCIKSFLIEIQ) are interacts with SPRY1, SPRY2, SPRY3 and SPRY4. S-palmitoyl cysteine attachment occurs at residues Cys133, Cys143, and Cys156. Residues 149-160 (SIYVHTFCDPLF) are interacts with SPRY1, SPRY2, and SPRY4. Residues 167–178 (FSNVRISMQKEI) are interacts with SPRY1, SPRY2, SPRY3 and SPRY4.

This sequence belongs to the caveolin family. As to quaternary structure, homooligomer. Interacts with GLIPR2. Interacts with NOSTRIN. Interacts with SNAP25 and STX1A. Interacts (via the N-terminus) with DPP4; the interaction is direct. Interacts with CTNNB1, CDH1 and JUP. Interacts with PACSIN2; this interaction induces membrane tubulation. Interacts with SLC7A9. Interacts with BMX and BTK. Interacts with TGFBR1. Interacts with CAVIN3 (via leucine-zipper domain) in a cholesterol-sensitive manner. Interacts with CAVIN1. Interacts with EHD2 in a cholesterol-dependent manner. Forms a ternary complex with UBXN6 and VCP; mediates CAV1 targeting to lysosomes for degradation. Interacts with ABCG1; this interaction regulates ABCG1-mediated cholesterol efflux. Interacts with NEU3; this interaction enhances NEU3 sialidase activity within caveola. Interacts (via C-terminus) with SPRY1, SPRY2 (via C-terminus), SPRY3, and SPRY4. Interacts with IGFBP5; this interaction allows trafficking of IGFBP5 from the plasma membrane to the nucleus. Post-translationally, phosphorylated at Tyr-14 by ABL1 in response to oxidative stress. In terms of processing, ubiquitinated. Undergo monoubiquitination and multi- and/or polyubiquitination. Monoubiquitination of N-terminal lysines promotes integration in a ternary complex with UBXN6 and VCP which promotes oligomeric CAV1 targeting to lysosomes for degradation. Ubiquitinated by ZNRF1; leading to degradation and modulation of the TLR4-mediated immune response.

Its subcellular location is the golgi apparatus membrane. It is found in the cell membrane. It localises to the membrane. The protein localises to the caveola. The protein resides in the membrane raft. Its function is as follows. May act as a scaffolding protein within caveolar membranes. Forms a stable heterooligomeric complex with CAV2 that targets to lipid rafts and drives caveolae formation. Mediates the recruitment of CAVIN proteins (CAVIN1/2/3/4) to the caveolae. Interacts directly with G-protein alpha subunits and can functionally regulate their activity. Involved in the costimulatory signal essential for T-cell receptor (TCR)-mediated T-cell activation. Its binding to DPP4 induces T-cell proliferation and NF-kappa-B activation in a T-cell receptor/CD3-dependent manner. Recruits CTNNB1 to caveolar membranes and may regulate CTNNB1-mediated signaling through the Wnt pathway. Negatively regulates TGFB1-mediated activation of SMAD2/3 by mediating the internalization of TGFBR1 from membrane rafts leading to its subsequent degradation. Binds 20(S)-hydroxycholesterol (20(S)-OHC). The protein is Caveolin-1 (CAV1) of Oryctolagus cuniculus (Rabbit).